The primary structure comprises 195 residues: MSRLATVQRTTTETDIEIRLNLDQPEFEAPATGHGFLDHMLDALARHSRLGLSVRASGDLHIEPHHLIEDAGITLGQALTQALGDRRGIERYGSAFVPMDETLAHVVVDLSGRAHLAFEPETLDVWGQAGGMTHYHLREFLRGLCNHGGVTMHVRLLAGREAHHVIEAIVKALARALRDAVALTSDQLPSTKGSL.

The protein belongs to the imidazoleglycerol-phosphate dehydratase family.

Its subcellular location is the cytoplasm. The enzyme catalyses D-erythro-1-(imidazol-4-yl)glycerol 3-phosphate = 3-(imidazol-4-yl)-2-oxopropyl phosphate + H2O. The protein operates within amino-acid biosynthesis; L-histidine biosynthesis; L-histidine from 5-phospho-alpha-D-ribose 1-diphosphate: step 6/9. The protein is Imidazoleglycerol-phosphate dehydratase of Deinococcus deserti (strain DSM 17065 / CIP 109153 / LMG 22923 / VCD115).